Reading from the N-terminus, the 338-residue chain is Homocysteine S-methyltransferase 3 (338 aa).

Residues 12–326 enclose the Hcy-binding domain; it reads AVRRWVDAAG…NTIRAIHRTL (315 aa). Positions 244, 311, and 312 each coordinate Zn(2+).

As to quaternary structure, monomer. The cofactor is Zn(2+).

The enzyme catalyses S-methyl-L-methionine + L-homocysteine = 2 L-methionine + H(+). In terms of biological role, catalyzes methyl transfer from S-methylmethionine (SMM) to adenosyl-L-homocysteine (AdoMet). SMM degradation (by HMT-1, HMT-2, HMT-3 and HMT-4) and biosynthesis (by MMT1) constitute the SMM cycle in plants, which is probably required to achieve short term control of AdoMet level. The protein is Homocysteine S-methyltransferase 3 (HMT-3) of Zea mays (Maize).